Reading from the N-terminus, the 441-residue chain is Methylenetetrahydrofolate--tRNA-(uracil-5-)-methyltransferase TrmFO (441 aa).

10 to 15 (GAGLAG) is a binding site for FAD.

The protein belongs to the MnmG family. TrmFO subfamily. It depends on FAD as a cofactor.

It localises to the cytoplasm. The enzyme catalyses uridine(54) in tRNA + (6R)-5,10-methylene-5,6,7,8-tetrahydrofolate + NADH + H(+) = 5-methyluridine(54) in tRNA + (6S)-5,6,7,8-tetrahydrofolate + NAD(+). The catalysed reaction is uridine(54) in tRNA + (6R)-5,10-methylene-5,6,7,8-tetrahydrofolate + NADPH + H(+) = 5-methyluridine(54) in tRNA + (6S)-5,6,7,8-tetrahydrofolate + NADP(+). In terms of biological role, catalyzes the folate-dependent formation of 5-methyl-uridine at position 54 (M-5-U54) in all tRNAs. This chain is Methylenetetrahydrofolate--tRNA-(uracil-5-)-methyltransferase TrmFO, found in Desulforamulus reducens (strain ATCC BAA-1160 / DSM 100696 / MI-1) (Desulfotomaculum reducens).